We begin with the raw amino-acid sequence, 306 residues long: Tyrosine recombinase XerD (306 aa).

One can recognise a Core-binding (CB) domain in the interval 1-83 (MGFIAQFLEM…TIKSYYEFLI (83 aa)). Positions 104–299 (KLPEILSIAQ…QTNHLKKALL (196 aa)) constitute a Tyr recombinase domain. Active-site residues include Arg145, Lys176, His251, Arg254, and His277. The active-site O-(3'-phospho-DNA)-tyrosine intermediate is the Tyr286.

It belongs to the 'phage' integrase family. XerD subfamily. Forms a cyclic heterotetrameric complex composed of two molecules of XerC and two molecules of XerD.

It is found in the cytoplasm. Functionally, site-specific tyrosine recombinase, which acts by catalyzing the cutting and rejoining of the recombining DNA molecules. The XerC-XerD complex is essential to convert dimers of the bacterial chromosome into monomers to permit their segregation at cell division. It also contributes to the segregational stability of plasmids. This chain is Tyrosine recombinase XerD, found in Rickettsia conorii (strain ATCC VR-613 / Malish 7).